The primary structure comprises 331 residues: Nucleotide sugar transporter SLC35B4 (331 aa).

A run of 11 helical transmembrane segments spans residues 4–24 (ALAVGLVFAGCCSNVIFLELL), 30–50 (GCGNIVTFAQFLFIAVEGFLF), 59–79 (PAIPIRYYAIMVTMFFTVSVV), 92–112 (LHMIFRSGSLIANMILGIIIL), 117–137 (SIFKYTSIALVSVGIFICTFM), 153–173 (GFQAFVWWLLGIGALTFALLM), 201–221 (ALPLPGFVFLASDIYDHAVLF), 229–249 (IPVIGVTLPIMWFYLLMNIIT), 251–267 (YVCIRGVFILTTECASL), 268–288 (TVTLVVTLRKFVSLIFSILYF), and 291–311 (PFTLWHWLGTLFVFIGTLMYT). The Mediates endoplasmic reticulum retention signature appears at 326–331 (KDSKKN).

Belongs to the nucleotide-sugar transporter family. SLC35B subfamily.

It localises to the endoplasmic reticulum membrane. The enzyme catalyses UDP-N-acetyl-alpha-D-glucosamine(in) + UDP-alpha-D-glucuronate(out) = UDP-N-acetyl-alpha-D-glucosamine(out) + UDP-alpha-D-glucuronate(in). It catalyses the reaction UDP-alpha-D-xylose(in) + UDP-alpha-D-glucuronate(out) = UDP-alpha-D-xylose(out) + UDP-alpha-D-glucuronate(in). Antiporter that transports nucleotide sugars across the endoplasmic reticulum (ER) membrane in exchange for another nucleotide sugar. May couple UDP-alpha-D-glucuronate (UDP-GlcA) or UDP-alpha-D-xylose (UDP-Xyl) efflux to UDP-alpha-D-glucuronate (UDP-GlcA) influx into the ER lumen, which in turn stimulates glucuronidation and excretion of endobiotics and xenobiotics. The protein is Nucleotide sugar transporter SLC35B4 (SLC35B4) of Pongo abelii (Sumatran orangutan).